The following is a 348-amino-acid chain: Dihydroorotase (348 aa).

His-17 and His-19 together coordinate Zn(2+). Substrate contacts are provided by residues 19-21 and Asn-45; that span reads HLR. Residues Lys-103, His-140, and His-178 each coordinate Zn(2+). The residue at position 103 (Lys-103) is an N6-carboxylysine. His-140 contributes to the substrate binding site. Leu-223 contributes to the substrate binding site. Asp-251 contributes to the Zn(2+) binding site. Asp-251 is an active-site residue. Substrate-binding residues include His-255 and Ala-267.

It belongs to the metallo-dependent hydrolases superfamily. DHOase family. Class II DHOase subfamily. Homodimer. Zn(2+) serves as cofactor.

The catalysed reaction is (S)-dihydroorotate + H2O = N-carbamoyl-L-aspartate + H(+). It functions in the pathway pyrimidine metabolism; UMP biosynthesis via de novo pathway; (S)-dihydroorotate from bicarbonate: step 3/3. Functionally, catalyzes the reversible cyclization of carbamoyl aspartate to dihydroorotate. This is Dihydroorotase from Escherichia coli O7:K1 (strain IAI39 / ExPEC).